A 109-amino-acid polypeptide reads, in one-letter code: Biphenyl dioxygenase ferredoxin subunit (109 aa).

The Rieske domain maps to 4-100 (TKACSVDEVP…IRIEGRDVLV (97 aa)). Cysteine 43, histidine 45, cysteine 63, and histidine 66 together coordinate [2Fe-2S] cluster.

This sequence belongs to the bacterial ring-hydroxylating dioxygenase ferredoxin component family. As to quaternary structure, this dioxygenase system consists of four proteins: the two subunits of the hydroxylase component (BphA1 and BphA2), a ferredoxin (BphA3) and a ferredoxin reductase (BphA4).

Functionally, this protein seems to be a 2Fe-2S ferredoxin. This chain is Biphenyl dioxygenase ferredoxin subunit (bphA3), found in Pseudomonas sp. (strain KKS102).